A 442-amino-acid chain; its full sequence is MSDTIAAIATAHGVGSISIVRLSGERALEFALKLSHKTKLTPRHATFTKLFNQNNEIIDEAIMIYFKAPYSFTGEDIVEFQIHGGFSVSEVLLEELVSLGARLALAGEFSKRACLNGKMTPLKALNIQDLILSKSALAAKIIARNMQGNLGELLEKIRTDLVKTLAFVETSIDYADDDLPSDLLEQISTMCEENSKILKEIYTLSQSKKGLIEGFKIAIVGKPNVGKSSLLNALLSYERAIVSDIAGTTRDTIEESFKLGTHLLRIIDTAGIRESKDVIEQIGVALSKKSLEDADIILAVFDASRVQDKEDEKIFDLLANTDKKIFWILNKSDLENVFKNTQNKNFIKLSAQKDITLLKEELQNYLNSFDSEGIMVSSLDLINACKISSEAIFRAKGLLEESSLELFAFELNLAINELARFTKDFQRDEILDEMFGNFCLGK.

3 residues coordinate (6S)-5-formyl-5,6,7,8-tetrahydrofolate: Arg-21, Glu-79, and Lys-118. The TrmE-type G domain occupies Gly-214–Asn-367. Residue Asn-224 participates in K(+) binding. GTP is bound by residues Asn-224–Ser-229, Ser-243–Thr-249, and Asp-268–Gly-271. Position 228 (Ser-228) interacts with Mg(2+). K(+)-binding residues include Ser-243, Ile-245, and Thr-248. Thr-249 provides a ligand contact to Mg(2+). Lys-442 contributes to the (6S)-5-formyl-5,6,7,8-tetrahydrofolate binding site.

This sequence belongs to the TRAFAC class TrmE-Era-EngA-EngB-Septin-like GTPase superfamily. TrmE GTPase family. Homodimer. Heterotetramer of two MnmE and two MnmG subunits. K(+) is required as a cofactor.

It is found in the cytoplasm. In terms of biological role, exhibits a very high intrinsic GTPase hydrolysis rate. Involved in the addition of a carboxymethylaminomethyl (cmnm) group at the wobble position (U34) of certain tRNAs, forming tRNA-cmnm(5)s(2)U34. The protein is tRNA modification GTPase MnmE of Campylobacter jejuni (strain RM1221).